The chain runs to 447 residues: Argininosuccinate synthase (447 aa).

Residues 12–20 (AYSGGLDTS) and A39 contribute to the ATP site. Residues Y92 and S97 each contribute to the L-citrulline site. Residue G122 coordinates ATP. Residues T124, N128, and D129 each contribute to the L-aspartate site. N128 contacts L-citrulline. Residues R132, S182, S191, E267, and Y279 each contribute to the L-citrulline site.

The protein belongs to the argininosuccinate synthase family. Type 1 subfamily. As to quaternary structure, homotetramer.

The protein localises to the cytoplasm. It carries out the reaction L-citrulline + L-aspartate + ATP = 2-(N(omega)-L-arginino)succinate + AMP + diphosphate + H(+). Its pathway is amino-acid biosynthesis; L-arginine biosynthesis; L-arginine from L-ornithine and carbamoyl phosphate: step 2/3. This chain is Argininosuccinate synthase, found in Sulfurovum sp. (strain NBC37-1).